A 1197-amino-acid chain; its full sequence is ATP-dependent helicase/nuclease subunit A (1197 aa).

The region spanning 2 to 458 is the UvrD-like helicase ATP-binding domain; that stretch reads RQWTKEQQAA…IDLAKNFRSR (457 aa). Residue 23-30 coordinates ATP; it reads AAAGSGKT. Positions 485–774 constitute a UvrD-like helicase C-terminal domain; it reads RAALYQGTEF…RIMSIHKSKG (290 aa).

Belongs to the helicase family. AddA subfamily. As to quaternary structure, heterodimer of AddA and AddB/RexB. It depends on Mg(2+) as a cofactor.

It catalyses the reaction Couples ATP hydrolysis with the unwinding of duplex DNA by translocating in the 3'-5' direction.. The catalysed reaction is ATP + H2O = ADP + phosphate + H(+). Its function is as follows. The heterodimer acts as both an ATP-dependent DNA helicase and an ATP-dependent, dual-direction single-stranded exonuclease. Recognizes the chi site generating a DNA molecule suitable for the initiation of homologous recombination. The AddA nuclease domain is required for chi fragment generation; this subunit has the helicase and 3' -&gt; 5' nuclease activities. This is ATP-dependent helicase/nuclease subunit A from Alkaliphilus oremlandii (strain OhILAs) (Clostridium oremlandii (strain OhILAs)).